Consider the following 456-residue polypeptide: Probable transcription factor At3g04930 (456 aa).

The tract at residues 1–71 (MTSDHRDALF…LNSPSTSSLP (71 aa)) is disordered. 2 stretches are compositionally biased toward acidic residues: residues 15–38 (ESPDPDEGGVADGGESDTDEDLRD) and 50–62 (AEAEDDDPEEEDL). Serine 16 is subject to Phosphoserine.

It belongs to the GeBP family.

This chain is Probable transcription factor At3g04930, found in Arabidopsis thaliana (Mouse-ear cress).